The chain runs to 573 residues: DNA ligase (573 aa).

Residue Glu250 participates in ATP binding. The active-site N6-AMP-lysine intermediate is the Lys252. ATP-binding residues include Arg257, Arg272, Glu301, Phe342, Arg432, and Lys438.

It belongs to the ATP-dependent DNA ligase family. The cofactor is Mg(2+).

It carries out the reaction ATP + (deoxyribonucleotide)n-3'-hydroxyl + 5'-phospho-(deoxyribonucleotide)m = (deoxyribonucleotide)n+m + AMP + diphosphate.. Functionally, DNA ligase that seals nicks in double-stranded DNA during DNA replication, DNA recombination and DNA repair. This chain is DNA ligase, found in Methanococcus maripaludis (strain C7 / ATCC BAA-1331).